Here is a 92-residue protein sequence, read N- to C-terminus: MGKGGNYVMVAASEVEELRQKNGEMEKAVEEMRKEMLQLWRRTQVAEEAEEHLCSQLAELEAESLDQARDYHTRIIFLTNQLSRFSSDSASP.

The stretch at 8 to 63 (VMVAASEVEELRQKNGEMEKAVEEMRKEMLQLWRRTQVAEEAEEHLCSQLAELEAE) forms a coiled coil.

Required for flower development in short-day conditions. In Arabidopsis thaliana (Mouse-ear cress), this protein is Protein RESPONSE TO LOW SULFUR 4.